Consider the following 210-residue polypeptide: Inner membrane-spanning protein YciB (210 aa).

The next 6 membrane-spanning stretches (helical) occupy residues 12-32 (EVSP…FFFA), 53-73 (IFIA…VSWM), 78-98 (LPMM…LTLW), 115-135 (LFGA…GYVF), 153-173 (WGVF…SFST), and 175-195 (FWVA…TLAQ).

Belongs to the YciB family.

The protein resides in the cell inner membrane. Functionally, plays a role in cell envelope biogenesis, maintenance of cell envelope integrity and membrane homeostasis. This is Inner membrane-spanning protein YciB from Sinorhizobium medicae (strain WSM419) (Ensifer medicae).